Reading from the N-terminus, the 430-residue chain is Probable transporter SCO4007 (430 aa).

Low complexity predominate over residues 1 to 17 (MPSSPSSTTPAPTSTPA). The tract at residues 1–26 (MPSSPSSTTPAPTSTPAARREPSGKG) is disordered. 11 helical membrane-spanning segments follow: residues 34–54 (LFLP…YLAA), 70–90 (AVAW…LFFA), 101–121 (LVAA…ASAG), 126–146 (AGAV…VPLV), 159–179 (VAAV…LGGL), 188–208 (AVFV…AYIL), 244–264 (AGMY…LTEG), 275–295 (GLFG…GGLV), 315–335 (VPLF…AVLV), 362–382 (TAYV…AGPA), and 383–403 (FGHW…VLGW).

It belongs to the major facilitator superfamily.

Its subcellular location is the cell membrane. The chain is Probable transporter SCO4007 from Streptomyces coelicolor (strain ATCC BAA-471 / A3(2) / M145).